The sequence spans 60 residues: Small, acid-soluble spore protein 1 (60 aa).

The protein belongs to the alpha/beta-type SASP family. In terms of processing, SASP are degraded in the first minutes of spore germination and provide amino acids for both new protein synthesis and metabolism.

In terms of biological role, SASP are bound to spore DNA. They are double-stranded DNA-binding proteins that cause DNA to change to an a-like conformation. They protect the DNA backbone from chemical and enzymatic cleavage and are thus involved in dormant spore's high resistance to UV light. This Clostridium perfringens (strain 13 / Type A) protein is Small, acid-soluble spore protein 1 (ssp1).